The sequence spans 283 residues: Protein FDD123 (283 aa).

The next 7 helical transmembrane spans lie at 24-44 (WLWAAFSVFGVSLLTVVAWTF), 52-72 (LFHQIAIVVLTTGSLAYFSMA), 97-117 (YIQWFITFPLLLLELLLATGL), 122-142 (IFTTLFMSIVLVITGLVAALV), 148-168 (WGYYTFGVSALFYIWYVLLWH), 185-205 (ILAAGYLSFLLLLYPIAWACA), and 217-237 (MIWYGILDIFAGPIFLFFFLW).

The protein belongs to the archaeal/bacterial/fungal opsin family.

It is found in the membrane. This Trametes versicolor (White-rot fungus) protein is Protein FDD123 (FDD123).